We begin with the raw amino-acid sequence, 92 residues long: Toxin RelE3 (92 aa).

This sequence belongs to the RelE toxin family.

In terms of biological role, toxic component of a type II toxin-antitoxin (TA) system. Its toxic effect is neutralized by coexpression with cognate antitoxin RelB3 but no other ParD or RelB antitoxin. This Caulobacter vibrioides (strain ATCC 19089 / CIP 103742 / CB 15) (Caulobacter crescentus) protein is Toxin RelE3 (relE3).